The primary structure comprises 676 residues: tRNA 5-methylaminomethyl-2-thiouridine biosynthesis bifunctional protein MnmC (676 aa).

The tRNA (mnm(5)s(2)U34)-methyltransferase stretch occupies residues 1–241 (MFTVTPAKIY…KRECLCGIKN (241 aa)). An FAD-dependent cmnm(5)s(2)U34 oxidoreductase region spans residues 268 to 676 (IGGGIASLFT…RKLLKGTEIK (409 aa)).

It in the N-terminal section; belongs to the methyltransferase superfamily. tRNA (mnm(5)s(2)U34)-methyltransferase family. The protein in the C-terminal section; belongs to the DAO family. It depends on FAD as a cofactor.

Its subcellular location is the cytoplasm. The catalysed reaction is 5-aminomethyl-2-thiouridine(34) in tRNA + S-adenosyl-L-methionine = 5-methylaminomethyl-2-thiouridine(34) in tRNA + S-adenosyl-L-homocysteine + H(+). Its function is as follows. Catalyzes the last two steps in the biosynthesis of 5-methylaminomethyl-2-thiouridine (mnm(5)s(2)U) at the wobble position (U34) in tRNA. Catalyzes the FAD-dependent demodification of cmnm(5)s(2)U34 to nm(5)s(2)U34, followed by the transfer of a methyl group from S-adenosyl-L-methionine to nm(5)s(2)U34, to form mnm(5)s(2)U34. The sequence is that of tRNA 5-methylaminomethyl-2-thiouridine biosynthesis bifunctional protein MnmC from Histophilus somni (strain 129Pt) (Haemophilus somnus).